Reading from the N-terminus, the 463-residue chain is MDSVNQRDRISSLPDVVLVMILSFLSFKDNVKTSILSKRWRNICYEAKNISFKESEYVDISVFDYVSKRVSFVRYMLNWVSRVPIKVIESFEICLGFPVGFEVEIKSLIEFSISRQVKKLVLDFSSPFWDNTWDGLRNDDFVIELPALIYGLQTLESLTIYACMFDPSRFTNVGLRTLSIGWFRLEKIESLLSKFPLLESLSIISCYLDEVKLAGQIRVRELIIDNCIIPTMYCLLNLPNIEIFKYSGNVIVFDFQKVNMILLKEVYLDFFIEHENDEPTYSPKEAGDILSHLLNDLRSSRTLTVCSYLLEVISECNDPVDMLRDVQAQHLVLETLMHPNEFTGMRLLLDHCPNLETLTFQLLCLKPFPVRLQYIDSHTLWLENISSRCLRRTLKILVVRGFCNSWNEFYLLNYLVLPEHGFALERVELYLPPLQEMPRQWAYHGAAMLQKTSNRVQVILHSA.

Residues 7 to 55 (RDRISSLPDVVLVMILSFLSFKDNVKTSILSKRWRNICYEAKNISFKES) form the F-box domain.

The protein is Putative F-box protein At3g29830 of Arabidopsis thaliana (Mouse-ear cress).